A 343-amino-acid polypeptide reads, in one-letter code: N-acetyl-gamma-glutamyl-phosphate reductase (343 aa).

Cys152 is a catalytic residue.

The protein belongs to the NAGSA dehydrogenase family. Type 1 subfamily.

The protein resides in the cytoplasm. It carries out the reaction N-acetyl-L-glutamate 5-semialdehyde + phosphate + NADP(+) = N-acetyl-L-glutamyl 5-phosphate + NADPH + H(+). It participates in amino-acid biosynthesis; L-arginine biosynthesis; N(2)-acetyl-L-ornithine from L-glutamate: step 3/4. Its function is as follows. Catalyzes the NADPH-dependent reduction of N-acetyl-5-glutamyl phosphate to yield N-acetyl-L-glutamate 5-semialdehyde. This chain is N-acetyl-gamma-glutamyl-phosphate reductase, found in Methanopyrus kandleri (strain AV19 / DSM 6324 / JCM 9639 / NBRC 100938).